A 348-amino-acid chain; its full sequence is Anthranilate phosphoribosyltransferase (348 aa).

5-phospho-alpha-D-ribose 1-diphosphate-binding positions include Gly89, 92–93 (GD), Thr97, 99–102 (NIST), 117–125 (KHGNRSASS), and Ser129. Residue Gly89 participates in anthranilate binding. A Mg(2+)-binding site is contributed by Ser101. Asn120 provides a ligand contact to anthranilate. An anthranilate-binding site is contributed by Arg175. Mg(2+)-binding residues include Asp234 and Glu235.

It belongs to the anthranilate phosphoribosyltransferase family. As to quaternary structure, homodimer. Mg(2+) is required as a cofactor.

The enzyme catalyses N-(5-phospho-beta-D-ribosyl)anthranilate + diphosphate = 5-phospho-alpha-D-ribose 1-diphosphate + anthranilate. Its pathway is amino-acid biosynthesis; L-tryptophan biosynthesis; L-tryptophan from chorismate: step 2/5. Functionally, catalyzes the transfer of the phosphoribosyl group of 5-phosphorylribose-1-pyrophosphate (PRPP) to anthranilate to yield N-(5'-phosphoribosyl)-anthranilate (PRA). This chain is Anthranilate phosphoribosyltransferase, found in Synechocystis sp. (strain ATCC 27184 / PCC 6803 / Kazusa).